Here is a 156-residue protein sequence, read N- to C-terminus: ATP synthase subunit b (156 aa).

Residues 7–29 traverse the membrane as a helical segment; the sequence is LIGQLIAFALFTWFCVKFVWPPI.

The protein belongs to the ATPase B chain family. F-type ATPases have 2 components, F(1) - the catalytic core - and F(0) - the membrane proton channel. F(1) has five subunits: alpha(3), beta(3), gamma(1), delta(1), epsilon(1). F(0) has three main subunits: a(1), b(2) and c(10-14). The alpha and beta chains form an alternating ring which encloses part of the gamma chain. F(1) is attached to F(0) by a central stalk formed by the gamma and epsilon chains, while a peripheral stalk is formed by the delta and b chains.

Its subcellular location is the cell inner membrane. Its function is as follows. F(1)F(0) ATP synthase produces ATP from ADP in the presence of a proton or sodium gradient. F-type ATPases consist of two structural domains, F(1) containing the extramembraneous catalytic core and F(0) containing the membrane proton channel, linked together by a central stalk and a peripheral stalk. During catalysis, ATP synthesis in the catalytic domain of F(1) is coupled via a rotary mechanism of the central stalk subunits to proton translocation. Component of the F(0) channel, it forms part of the peripheral stalk, linking F(1) to F(0). This Mannheimia succiniciproducens (strain KCTC 0769BP / MBEL55E) protein is ATP synthase subunit b.